Here is a 502-residue protein sequence, read N- to C-terminus: 2,3-bisphosphoglycerate-independent phosphoglycerate mutase (502 aa).

Positions 12 and 62 each coordinate Mn(2+). S62 functions as the Phosphoserine intermediate in the catalytic mechanism. Residues H123, 152-153 (RD), R183, R189, 255-258 (RPDR), and K329 each bind substrate. 5 residues coordinate Mn(2+): D394, H398, D435, H436, and H453.

It belongs to the BPG-independent phosphoglycerate mutase family. As to quaternary structure, monomer. Mn(2+) is required as a cofactor.

It catalyses the reaction (2R)-2-phosphoglycerate = (2R)-3-phosphoglycerate. Its pathway is carbohydrate degradation; glycolysis; pyruvate from D-glyceraldehyde 3-phosphate: step 3/5. Its function is as follows. Catalyzes the interconversion of 2-phosphoglycerate and 3-phosphoglycerate. This chain is 2,3-bisphosphoglycerate-independent phosphoglycerate mutase, found in Malacoplasma penetrans (strain HF-2) (Mycoplasma penetrans).